The following is a 274-amino-acid chain: Tryptophan synthase alpha chain (274 aa).

Active-site proton acceptor residues include Glu-49 and Asp-60.

It belongs to the TrpA family. In terms of assembly, tetramer of two alpha and two beta chains.

It carries out the reaction (1S,2R)-1-C-(indol-3-yl)glycerol 3-phosphate + L-serine = D-glyceraldehyde 3-phosphate + L-tryptophan + H2O. It participates in amino-acid biosynthesis; L-tryptophan biosynthesis; L-tryptophan from chorismate: step 5/5. In terms of biological role, the alpha subunit is responsible for the aldol cleavage of indoleglycerol phosphate to indole and glyceraldehyde 3-phosphate. The chain is Tryptophan synthase alpha chain from Gluconacetobacter diazotrophicus (strain ATCC 49037 / DSM 5601 / CCUG 37298 / CIP 103539 / LMG 7603 / PAl5).